A 196-amino-acid chain; its full sequence is Probable phosphoheptose isomerase (196 aa).

One can recognise an SIS domain in the interval 43-196 (IVNVFNSGGK…MICSVIDSYY (154 aa)). 58–60 (NGG) serves as a coordination point for substrate. Zn(2+) is bound by residues His67 and Glu71. Residues Glu71, 100–101 (ND), 126–128 (STS), Ser131, and Gln178 each bind substrate. Positions 178 and 186 each coordinate Zn(2+).

The protein belongs to the SIS family. GmhA subfamily. It depends on Zn(2+) as a cofactor.

It is found in the cytoplasm. The enzyme catalyses 2 D-sedoheptulose 7-phosphate = D-glycero-alpha-D-manno-heptose 7-phosphate + D-glycero-beta-D-manno-heptose 7-phosphate. It participates in carbohydrate biosynthesis; D-glycero-D-manno-heptose 7-phosphate biosynthesis; D-glycero-alpha-D-manno-heptose 7-phosphate and D-glycero-beta-D-manno-heptose 7-phosphate from sedoheptulose 7-phosphate: step 1/1. Functionally, catalyzes the isomerization of sedoheptulose 7-phosphate in D-glycero-D-manno-heptose 7-phosphate. This Thermoplasma volcanium (strain ATCC 51530 / DSM 4299 / JCM 9571 / NBRC 15438 / GSS1) protein is Probable phosphoheptose isomerase.